The following is a 79-amino-acid chain: Suppressor of tumorigenicity 20 protein (79 aa).

As to expression, expressed in leukocytes, lung, spleen, liver, heart, kidney, muscle and uterine cervix. Down-regulated in cervical cancer.

Functionally, may act as a tumor suppressor. Promotes apoptosis of cancer cells. The chain is Suppressor of tumorigenicity 20 protein (ST20) from Homo sapiens (Human).